Reading from the N-terminus, the 387-residue chain is 1-deoxy-D-xylulose 5-phosphate reductoisomerase (387 aa).

Residues Thr10, Gly11, Ser12, Val13, Asn38, and Asn119 each contribute to the NADPH site. A 1-deoxy-D-xylulose 5-phosphate-binding site is contributed by Lys120. NADPH is bound at residue Glu121. Position 145 (Asp145) interacts with Mn(2+). 4 residues coordinate 1-deoxy-D-xylulose 5-phosphate: Ser146, Glu147, Ser170, and His193. Glu147 contributes to the Mn(2+) binding site. Gly199 is an NADPH binding site. Residues Ser206, Asn211, Lys212, and Glu215 each contribute to the 1-deoxy-D-xylulose 5-phosphate site. Mn(2+) is bound at residue Glu215.

It belongs to the DXR family. Mg(2+) serves as cofactor. Requires Mn(2+) as cofactor.

It carries out the reaction 2-C-methyl-D-erythritol 4-phosphate + NADP(+) = 1-deoxy-D-xylulose 5-phosphate + NADPH + H(+). It participates in isoprenoid biosynthesis; isopentenyl diphosphate biosynthesis via DXP pathway; isopentenyl diphosphate from 1-deoxy-D-xylulose 5-phosphate: step 1/6. In terms of biological role, catalyzes the NADPH-dependent rearrangement and reduction of 1-deoxy-D-xylulose-5-phosphate (DXP) to 2-C-methyl-D-erythritol 4-phosphate (MEP). This is 1-deoxy-D-xylulose 5-phosphate reductoisomerase from Wolbachia pipientis wMel.